Reading from the N-terminus, the 298-residue chain is tRNA dimethylallyltransferase (298 aa).

Residue 16 to 23 (GPTASGKS) participates in ATP binding. 18 to 23 (TASGKS) lines the substrate pocket. Interaction with substrate tRNA regions lie at residues 41–44 (DSMQ) and 165–169 (QRIVR).

Belongs to the IPP transferase family. As to quaternary structure, monomer. Requires Mg(2+) as cofactor.

The catalysed reaction is adenosine(37) in tRNA + dimethylallyl diphosphate = N(6)-dimethylallyladenosine(37) in tRNA + diphosphate. In terms of biological role, catalyzes the transfer of a dimethylallyl group onto the adenine at position 37 in tRNAs that read codons beginning with uridine, leading to the formation of N6-(dimethylallyl)adenosine (i(6)A). The chain is tRNA dimethylallyltransferase from Rhizobium rhizogenes (strain K84 / ATCC BAA-868) (Agrobacterium radiobacter).